The sequence spans 202 residues: Imidazoleglycerol-phosphate dehydratase (202 aa).

This sequence belongs to the imidazoleglycerol-phosphate dehydratase family.

The protein localises to the cytoplasm. The catalysed reaction is D-erythro-1-(imidazol-4-yl)glycerol 3-phosphate = 3-(imidazol-4-yl)-2-oxopropyl phosphate + H2O. It participates in amino-acid biosynthesis; L-histidine biosynthesis; L-histidine from 5-phospho-alpha-D-ribose 1-diphosphate: step 6/9. The chain is Imidazoleglycerol-phosphate dehydratase from Acinetobacter baylyi (strain ATCC 33305 / BD413 / ADP1).